A 174-amino-acid polypeptide reads, in one-letter code: Protein COFACTOR ASSEMBLY OF COMPLEX C SUBUNIT B CCB3, chloroplastic (174 aa).

The N-terminal 39 residues, 1–39, are a transit peptide targeting the chloroplast; sequence MTTVTTSFVSFSPALMIFQKKSRRSSPNFRNRSTSLPIV. Over 40–78 the chain is Lumenal; that stretch reads SATLSHIEEAATTTNLIRQTNSISESLRNISLADLDPGT. Residues 79–99 form a helical membrane-spanning segment; it reads AKLAIGILGPALSAFGFLFIL. The Stromal segment spans residues 100 to 147; it reads RIVMSWYPKLPVDKFPYVLAYAPTEPILVQTRKVIPPLAGVDVTPVVW. Residues 148-168 form a helical membrane-spanning segment; sequence FGLVSFLSEILVGPQGLLVLV. Topologically, residues 169 to 174 are lumenal; the sequence is SQQQVN.

The protein belongs to the YggT family.

The protein resides in the plastid. The protein localises to the chloroplast thylakoid membrane. In terms of biological role, required for the biogenesis and accumulation of native cytochrome b6 in the thylakoid membrane. Controls the conversion of apocytochrome b6 to holocytochrome b6. Required for covalent binding of the c-type heme to cytochrome b6. The polypeptide is Protein COFACTOR ASSEMBLY OF COMPLEX C SUBUNIT B CCB3, chloroplastic (Arabidopsis thaliana (Mouse-ear cress)).